The following is a 376-amino-acid chain: Erythronate-4-phosphate dehydrogenase (376 aa).

Positions 45 and 67 each coordinate substrate. Residue Asp-147 coordinates NAD(+). Residue Arg-209 is part of the active site. An NAD(+)-binding site is contributed by Asp-233. Glu-238 is a catalytic residue. Residue His-255 is the Proton donor of the active site. Gly-258 contributes to the NAD(+) binding site. Tyr-259 provides a ligand contact to substrate.

Belongs to the D-isomer specific 2-hydroxyacid dehydrogenase family. PdxB subfamily. As to quaternary structure, homodimer.

The protein localises to the cytoplasm. The enzyme catalyses 4-phospho-D-erythronate + NAD(+) = (R)-3-hydroxy-2-oxo-4-phosphooxybutanoate + NADH + H(+). Its pathway is cofactor biosynthesis; pyridoxine 5'-phosphate biosynthesis; pyridoxine 5'-phosphate from D-erythrose 4-phosphate: step 2/5. Its function is as follows. Catalyzes the oxidation of erythronate-4-phosphate to 3-hydroxy-2-oxo-4-phosphonooxybutanoate. The sequence is that of Erythronate-4-phosphate dehydrogenase from Shewanella baltica (strain OS223).